A 214-amino-acid chain; its full sequence is tRNA (guanine-N(7)-)-methyltransferase (214 aa).

S-adenosyl-L-methionine contacts are provided by E45, D70, N97, and N119. K123 contacts substrate. Residues 125–130 (RHNKRR) are interaction with RNA. Substrate is bound by residues D155 and 193-196 (TEYE).

This sequence belongs to the class I-like SAM-binding methyltransferase superfamily. TrmB family.

It catalyses the reaction guanosine(46) in tRNA + S-adenosyl-L-methionine = N(7)-methylguanosine(46) in tRNA + S-adenosyl-L-homocysteine. It participates in tRNA modification; N(7)-methylguanine-tRNA biosynthesis. In terms of biological role, catalyzes the formation of N(7)-methylguanine at position 46 (m7G46) in tRNA. This is tRNA (guanine-N(7)-)-methyltransferase from Clostridium novyi (strain NT).